The chain runs to 159 residues: Transcription repressor OFP6 (159 aa).

The tract at residues 39–60 is disordered; it reads PKRPSSTYRHCHSSISSATPSS. Residues 51–60 are compositionally biased toward low complexity; that stretch reads SSISSATPSS. The OVATE domain maps to 70–129; that stretch reads VEKDSDDPYLDFRQSMLQMILENQIYSKDELRELLQCFLSLNSHYHHGIIVRAFSEIWED.

Interacts with KNAT1 and KNAT7. Expressed in roots, shoots, rosette and cauline leaves, stems, flower buds and siliques.

It localises to the nucleus. Its function is as follows. Transcriptional repressor that regulates multiple aspects of plant growth and development through the regulation of BEL1-LIKE (BLH) and KNOX TALE (KNAT) homeodomain transcription factors. This chain is Transcription repressor OFP6 (OFP6), found in Arabidopsis thaliana (Mouse-ear cress).